A 396-amino-acid polypeptide reads, in one-letter code: Purine ribonucleoside efflux pump NepI (396 aa).

Topologically, residues Met1–Ala21 are cytoplasmic. The helical transmembrane segment at Val22–Leu42 threads the bilayer. The Periplasmic portion of the chain corresponds to Leu43–Glu54. Residues Gly55 to Ile75 traverse the membrane as a helical segment. Residues Thr76–Arg85 are Cytoplasmic-facing. A helical transmembrane segment spans residues Tyr86–Asn106. Ser107 is a topological domain (periplasmic). Residues Phe108–Met128 form a helical membrane-spanning segment. The Cytoplasmic segment spans residues Ser129–Ser147. The helical transmembrane segment at Val148–Gly168 threads the bilayer. Residues Glu169–Asn175 are Periplasmic-facing. A helical membrane pass occupies residues Val176–Pro196. Residues Ser197–Arg215 are Cytoplasmic-facing. The helical transmembrane segment at Pro216–Phe236 threads the bilayer. Residues Thr237–Thr255 are Periplasmic-facing. The chain crosses the membrane as a helical span at residues Leu256–Leu276. Residues Lys277–Lys281 lie on the Cytoplasmic side of the membrane. The chain crosses the membrane as a helical span at residues Leu282–Gly302. At Ser303 to Lys305 the chain is on the periplasmic side. Residues Ile306 to Trp326 traverse the membrane as a helical segment. Over Ser327–Ser343 the chain is Cytoplasmic. The chain crosses the membrane as a helical span at residues Ile344–Leu364. Residues Asp365 to Asn366 lie on the Periplasmic side of the membrane. A helical transmembrane segment spans residues Ile367–Val387. Topologically, residues Thr388–Ser396 are cytoplasmic.

Belongs to the major facilitator superfamily. DHA1 family. NepI (TC 2.A.1.2.26) subfamily.

The protein resides in the cell inner membrane. It carries out the reaction inosine(in) + H(+)(out) = inosine(out) + H(+)(in). The catalysed reaction is guanosine(in) + H(+)(out) = guanosine(out) + H(+)(in). In terms of biological role, involved in the efflux of purine ribonucleosides, such as inosine and guanosine. This chain is Purine ribonucleoside efflux pump NepI, found in Escherichia coli O157:H7.